Here is a 153-residue protein sequence, read N- to C-terminus: ORM1-like protein 3 (153 aa).

The tract at residues 1–17 (MNVGTAHSEVNPNTRVM) is important for ceramide level-sensing. At 1–21 (MNVGTAHSEVNPNTRVMNSRG) the chain is on the cytoplasmic side. A run of 2 helical transmembrane segments spans residues 22–44 (IWLSYVLAIGLLHIVLLSIPFVS) and 45–63 (VPVVWTLTNLIHNMGMYIF). At 64 to 100 (LHTVKGTPFETPDQGKARLLTHWEQMDYGVQFTASRK) the chain is on the cytoplasmic side. The chain crosses the membrane as a helical span at residues 101–117 (FLTITPIVLYFLTSFYT). Over 118-121 (KYDQ) the chain is Lumenal. The helical transmembrane segment at 122-139 (IHFVLNTVSLMSVLIPKL) threads the bilayer. Pro-137 is subject to Hydroxyproline. Over 140–153 (PQLHGVRIFGINKY) the chain is Cytoplasmic.

Belongs to the ORM family. Ceramide-sensitive subunit of the serine palmitoyltransferase (SPT) complex, which is also composed of SPTLC1, SPTLC2/3 and SPTSSA/B. Post-translationally, when hydroxylated at Pro-137, ubiquitinated via 'Lys-48'-linkage, leading to proteasomal degradation. In endothelial cells, ORMDL3 proteasomal degradation is controlled by the sphingosine 1-phosphate receptor signaling pathway. As to expression, widely expressed. Expressed in adult and fetal heart, brain, lung, liver, skeletal muscle and kidney. Expressed in adult pancreas and placenta and in fetal spleen and thymus.

The protein localises to the endoplasmic reticulum membrane. In terms of biological role, plays an essential role in the homeostatic regulation of sphingolipid de novo biosynthesis by modulating the activity of the serine palmitoyltransferase (SPT) in response to ceramide levels. When complexed to SPT, the binding of ceramides to its N-terminus stabilizes a conformation that block SPT substrate entry, hence preventing SPT catalytic activity. Through this mechanism, maintains ceramide levels at sufficient concentrations for the production of complex sphingolipids, but which prevents the accumulation of ceramides to levels that trigger apoptosis. The chain is ORM1-like protein 3 (ORMDL3) from Homo sapiens (Human).